Consider the following 374-residue polypeptide: Histidinol-phosphate aminotransferase 1 (374 aa).

Residue K232 is modified to N6-(pyridoxal phosphate)lysine.

This sequence belongs to the class-II pyridoxal-phosphate-dependent aminotransferase family. Histidinol-phosphate aminotransferase subfamily. Homodimer. The cofactor is pyridoxal 5'-phosphate.

It carries out the reaction L-histidinol phosphate + 2-oxoglutarate = 3-(imidazol-4-yl)-2-oxopropyl phosphate + L-glutamate. It functions in the pathway amino-acid biosynthesis; L-histidine biosynthesis; L-histidine from 5-phospho-alpha-D-ribose 1-diphosphate: step 7/9. The polypeptide is Histidinol-phosphate aminotransferase 1 (hisC1) (Ralstonia nicotianae (strain ATCC BAA-1114 / GMI1000) (Ralstonia solanacearum)).